We begin with the raw amino-acid sequence, 359 residues long: MGRISRPRRGSLAYSPRKRAKSIVPRIRKWPQEQEVRMLGFAGYKAGMTHVLMIDDAPGLTKGKEIFVPVTIVEAPPLMVYGIRAYKRGYFGLETATEVIVPDFKLENYPSKRAKNVTFYKLLERRIKTLPKNYTEEVFQQKLGELEDLVKTGEVVELRALVATQPWLARIKKKPEVMEYAVGGTSIEEKFNYIKEKLGKEIRVGEILQEGELLDIVAVTKGKGTQGPVKRWGVKLTSHKDSKGRRKVATIGPWHPARVMWTVPRAGQMGFHHRTEFNKRLLRIGENGKLTLNGEKIEITPNGGFPHYGVVKNDFIMIAGTIPGAIKRIIRMRPAVRPPAKRPPAEAPQITYISRESKQ.

The disordered stretch occupies residues 336–359 (VRPPAKRPPAEAPQITYISRESKQ).

It belongs to the universal ribosomal protein uL3 family. In terms of assembly, part of the 50S ribosomal subunit. Forms a cluster with proteins L14 and L24e.

Functionally, one of the primary rRNA binding proteins, it binds directly near the 3'-end of the 23S rRNA, where it nucleates assembly of the 50S subunit. The sequence is that of Large ribosomal subunit protein uL3 from Thermococcus sibiricus (strain DSM 12597 / MM 739).